The sequence spans 444 residues: Methylenetetrahydrofolate--tRNA-(uracil-5-)-methyltransferase TrmFO (444 aa).

Position 9–14 (Gly9–Gly14) interacts with FAD.

It belongs to the MnmG family. TrmFO subfamily. It depends on FAD as a cofactor.

It localises to the cytoplasm. It carries out the reaction uridine(54) in tRNA + (6R)-5,10-methylene-5,6,7,8-tetrahydrofolate + NADH + H(+) = 5-methyluridine(54) in tRNA + (6S)-5,6,7,8-tetrahydrofolate + NAD(+). The catalysed reaction is uridine(54) in tRNA + (6R)-5,10-methylene-5,6,7,8-tetrahydrofolate + NADPH + H(+) = 5-methyluridine(54) in tRNA + (6S)-5,6,7,8-tetrahydrofolate + NADP(+). In terms of biological role, catalyzes the folate-dependent formation of 5-methyl-uridine at position 54 (M-5-U54) in all tRNAs. This is Methylenetetrahydrofolate--tRNA-(uracil-5-)-methyltransferase TrmFO from Cereibacter sphaeroides (strain ATCC 17029 / ATH 2.4.9) (Rhodobacter sphaeroides).